The chain runs to 367 residues: MSFDSVPRHALSMRFDLEPPSHASAAHRVAVLLVNLGTPDAPTPRAVRRYLAQFLSDPRVVEIPQLVWQVILRTLILPLRGRASAKKYAAVWLPEGSPLRVYTERQVESVKPLFAANGYRVIVDYAMRYGTPSIADVLAQLKRAGAERVLLLPMYPQYSSSTTATAFDAAFAALGRMRNQPEVRTVRHYADHPAYIHALAEQVRQYWAAHGRPAFDAGDKLVLSFHGVPKRTLDLGDPYHDQCQQTAALLMSALGLTTFECRVTFQSRFGKAEWLQPYTAPTLKELGAAGVRRADVFCPGFTADCLETIEEIGIEVRDAFVHGGGKEFHRIPCLNASPAWIAALGEIAAENLQGWPVRVAMAPEAVS.

Residues histidine 226 and glutamate 307 each coordinate Fe cation.

The protein belongs to the ferrochelatase family.

The protein localises to the cytoplasm. The catalysed reaction is heme b + 2 H(+) = protoporphyrin IX + Fe(2+). It participates in porphyrin-containing compound metabolism; protoheme biosynthesis; protoheme from protoporphyrin-IX: step 1/1. Catalyzes the ferrous insertion into protoporphyrin IX. The protein is Ferrochelatase of Burkholderia pseudomallei (strain 668).